The sequence spans 397 residues: DNA-directed RNA polymerase subunit Rpo1C (397 aa).

Belongs to the RNA polymerase beta' chain family. In terms of assembly, part of the RNA polymerase complex.

It is found in the cytoplasm. The catalysed reaction is RNA(n) + a ribonucleoside 5'-triphosphate = RNA(n+1) + diphosphate. Its function is as follows. DNA-dependent RNA polymerase (RNAP) catalyzes the transcription of DNA into RNA using the four ribonucleoside triphosphates as substrates. Forms part of the jaw domain. The sequence is that of DNA-directed RNA polymerase subunit Rpo1C from Methanococcus aeolicus (strain ATCC BAA-1280 / DSM 17508 / OCM 812 / Nankai-3).